Here is a 393-residue protein sequence, read N- to C-terminus: NAD(P)H-quinone oxidoreductase subunit H, chloroplastic (393 aa).

This sequence belongs to the complex I 49 kDa subunit family. As to quaternary structure, NDH is composed of at least 16 different subunits, 5 of which are encoded in the nucleus.

Its subcellular location is the plastid. The protein localises to the chloroplast thylakoid membrane. The catalysed reaction is a plastoquinone + NADH + (n+1) H(+)(in) = a plastoquinol + NAD(+) + n H(+)(out). It catalyses the reaction a plastoquinone + NADPH + (n+1) H(+)(in) = a plastoquinol + NADP(+) + n H(+)(out). Its function is as follows. NDH shuttles electrons from NAD(P)H:plastoquinone, via FMN and iron-sulfur (Fe-S) centers, to quinones in the photosynthetic chain and possibly in a chloroplast respiratory chain. The immediate electron acceptor for the enzyme in this species is believed to be plastoquinone. Couples the redox reaction to proton translocation, and thus conserves the redox energy in a proton gradient. The protein is NAD(P)H-quinone oxidoreductase subunit H, chloroplastic of Trifolium subterraneum (Subterranean clover).